A 70-amino-acid polypeptide reads, in one-letter code: Conotoxin Lt11.2 (70 aa).

A signal peptide spans 1 to 26 (MMFRLTSVSCFLLFIVFLNLVVLTNA). 4 disulfides stabilise this stretch: cysteine 27–cysteine 41, cysteine 34–cysteine 46, cysteine 40–cysteine 50, and cysteine 45–cysteine 54. Position 57 is a proline amide (proline 57). Positions 61–70 (EKLQEFFRQR) are excised as a propeptide.

It belongs to the conotoxin I2 superfamily. In terms of tissue distribution, expressed by the venom duct.

The protein localises to the secreted. The sequence is that of Conotoxin Lt11.2 from Conus litteratus (Lettered cone).